A 292-amino-acid chain; its full sequence is 4-hydroxy-tetrahydrodipicolinate synthase (292 aa).

T44 is a pyruvate binding site. Y132 acts as the Proton donor/acceptor in catalysis. Residue K161 is the Schiff-base intermediate with substrate of the active site. Residue I203 participates in pyruvate binding.

This sequence belongs to the DapA family. As to quaternary structure, homotetramer; dimer of dimers.

The protein localises to the cytoplasm. It carries out the reaction L-aspartate 4-semialdehyde + pyruvate = (2S,4S)-4-hydroxy-2,3,4,5-tetrahydrodipicolinate + H2O + H(+). It functions in the pathway amino-acid biosynthesis; L-lysine biosynthesis via DAP pathway; (S)-tetrahydrodipicolinate from L-aspartate: step 3/4. Functionally, catalyzes the condensation of (S)-aspartate-beta-semialdehyde [(S)-ASA] and pyruvate to 4-hydroxy-tetrahydrodipicolinate (HTPA). The sequence is that of 4-hydroxy-tetrahydrodipicolinate synthase from Fervidobacterium nodosum (strain ATCC 35602 / DSM 5306 / Rt17-B1).